The following is a 90-amino-acid chain: MKTAMLIAVLGFCAALCFVESSHEEEREAAVYLTDLVSKAESAIKRGIPCRCDKNSDELNGEQSYMNGNCGDGWKKCRSVNAIFNCCQRV.

A signal peptide spans M1–S21. The propeptide occupies S22 to I44. 3 cysteine pairs are disulfide-bonded: C50-C86, C52-C77, and C70-C87.

It belongs to the sea anemone sodium channel inhibitory toxin family.

It localises to the secreted. The protein resides in the nematocyst. Its function is as follows. Cardioactive peptide that acts on voltage-gated sodium channels (hNav1.5/SCN5A) and voltage-gated potassium channels (Kv). The activity on sodium channels consists of inhibition on sodium current inactivation with no significant effect on current activation. This effect may be caused by direct interaction of the toxin with sodium channel site-3. The activity on potassium channels consists of a significant increase of the amplitude of the transient component of the potassium current, shifting the current threshold to more negative membrane potentials. These effects are concentration-dependent and reversible and may be due to a direct interaction between the toxin and the voltage-sensing domain of the channel. Physiologically, this toxin increases the amplitude of cardiomyocyte contraction and slows the late phase of the twitch relaxation velocity with no induction of spontaneous twitching. It increases action potential duration of cardiomyocytes with no effect on its threshold and on the cell resting potential. On insects, it shows neurotoxic activity to the blowfly larvae S.falculaty, causing an immediate spasm that progressed to body contraction and paralysis. This is Delta-aiptatoxin-Adi1a from Exaiptasia diaphana (Tropical sea anemone).